We begin with the raw amino-acid sequence, 377 residues long: N-acetyldiaminopimelate deacetylase (377 aa).

The active site involves D70. Catalysis depends on E129, which acts as the Proton acceptor.

The protein belongs to the peptidase M20A family. N-acetyldiaminopimelate deacetylase subfamily.

It catalyses the reaction N-acetyl-(2S,6S)-2,6-diaminopimelate + H2O = (2S,6S)-2,6-diaminopimelate + acetate. It functions in the pathway amino-acid biosynthesis; L-lysine biosynthesis via DAP pathway; LL-2,6-diaminopimelate from (S)-tetrahydrodipicolinate (acetylase route): step 3/3. Functionally, catalyzes the conversion of N-acetyl-diaminopimelate to diaminopimelate and acetate. This is N-acetyldiaminopimelate deacetylase from Geobacillus thermodenitrificans (strain NG80-2).